Reading from the N-terminus, the 343-residue chain is MSNYQFTKPAGPFYLAELAEISGSTLYEGKGEAFTVSGLAKLSEATTHNLVMLHQKKYLKELKNTAARACIIGPEYVKFAPDSMYLLVHPNPYKAFALIAQAFYPSEKPAGFIASSAAIETSAVIGSNCYIAHGVYIGNNAKIGSGCQIGVNTYIGDGVTIGDDCLIEDNVSIRHAVIGKHVVIYPGARIGQDGFGFASDASGHYKIPHAGGVIIGNHVEIGANTCIDRGSLDNTVIEDWCRLDNLVQVGHNVKIGKGSIIVAQVGIAGSTELGEYVTLAGQAGVIGHLKIGKGATVLASGKVYKNVKSGDRVGGHPAVSISDWQKQIRFLKTAIKPKKSPKS.

H251 acts as the Proton acceptor in catalysis.

It belongs to the transferase hexapeptide repeat family. LpxD subfamily. Homotrimer.

The enzyme catalyses a UDP-3-O-[(3R)-3-hydroxyacyl]-alpha-D-glucosamine + a (3R)-hydroxyacyl-[ACP] = a UDP-2-N,3-O-bis[(3R)-3-hydroxyacyl]-alpha-D-glucosamine + holo-[ACP] + H(+). It participates in bacterial outer membrane biogenesis; LPS lipid A biosynthesis. In terms of biological role, catalyzes the N-acylation of UDP-3-O-acylglucosamine using 3-hydroxyacyl-ACP as the acyl donor. Is involved in the biosynthesis of lipid A, a phosphorylated glycolipid that anchors the lipopolysaccharide to the outer membrane of the cell. In Legionella pneumophila (strain Lens), this protein is UDP-3-O-acylglucosamine N-acyltransferase 2.